The chain runs to 298 residues: Protease HtpX homolog (298 aa).

2 helical membrane-spanning segments follow: residues 14 to 34 (ILVMFGFFVLLALIGAAIGYL) and 39 to 59 (VIGGMIIAAIIAVIYMSVIIG). H144 is a Zn(2+) binding site. The active site involves E145. Residue H148 participates in Zn(2+) binding. The next 2 membrane-spanning stretches (helical) occupy residues 159–179 (IALALASAIAMLVNFAGNFWW) and 195–215 (IFAILGSILLIILAPLAATIA). E224 lines the Zn(2+) pocket.

This sequence belongs to the peptidase M48B family. The cofactor is Zn(2+).

The protein resides in the cell membrane. The polypeptide is Protease HtpX homolog (Limosilactobacillus reuteri (strain DSM 20016) (Lactobacillus reuteri)).